We begin with the raw amino-acid sequence, 93 residues long: LSM complex subunit LSM5 (93 aa).

The Sm domain occupies 7–87; sequence LPLEVIDKTI…IAILVPGGKK (81 aa).

Belongs to the snRNP Sm proteins family. Component of the heptameric LSM1-LSM7 complex that forms a seven-membered ring structure with a donut shape. The LSm subunits are arranged in the order LSM1, LSM2, LSM3, LSM6, LSM5, LSM7 and LSM4. Except for LSM1, where a C-terminal helix crosses the ring structure to form additional interactions with LSM3 and LSM6, each subunit interacts only with its two neighboring subunits. The LSM1-LSM7 complex interacts with PAT1; within the complex PAT1 has direct interactions with LSM2 and LSM3. The LSM1-LSM7 complex interacts with XRN1. Component of the heptameric LSM2-LSM8 complex that forms a seven-membered ring structure with a donut shape; an RNA strand can pass through the hole in the center of the ring structure. The LSm subunits are arranged in the order LSM8, LSM2, LSM3, LSM6, LSM5, LSM7 and LSM4. Component of the spliceosome U4/U6-U5 tri-snRNP complex composed of the U4, U6 and U5 snRNAs and at least PRP3, PRP4, PRP6, PRP8, PRP18, PRP31, PRP38, SNU13, SNU23, SNU66, SNU114, SPP381, SMB1, SMD1, SMD2, SMD3, SMX2, SMX3, LSM2, LSM3, LSM4, LSM5, LSM6, LSM7, LSM8, BRR2 and DIB1. May be found in a complex comprising LSM2-LSM7 without LSM1 or LSM8; the complex associates with pre-P RNA and snoRNA SNR5.

It localises to the nucleus. The protein localises to the nucleolus. Its subcellular location is the cytoplasm. In terms of biological role, component of LSm protein complexes, which are involved in RNA processing and may function in a chaperone-like manner. Component of the cytoplasmic LSM1-LSM7 complex which is involved in mRNA degradation by activating the decapping step. Together with PAT1, the LSM1-LSM7 complex binds to osmotic stress-activated mRNAs to attenuate the osmotic stress response, probably by limiting ribosome access to the mRNA and consequently translation. Component of the nuclear LSM2-LSM8 complex, which is involved in spliceosome assembly. The LSM2-LSM8 complex plays a role in the biogenesis of the spliceosomal U4/U6-U5 tri-snRNP complex by accelerating PRP24-mediated annealing of U4/U6 di-snRNA. The LSM2-LSM8 complex binds U6 snRNA terminating with a non-cyclic 3' phosphate group. LSM2-LSM8 is probably also involved in degradation of nuclear pre-mRNA by targeting them for decapping. LSM2-LSM8 could be involved in processing of pre-tRNAs, pre-rRNAs and U3 snoRNA, although involvement may be indirect. In a complex that probably contains LSM2-LSM7, but not LSM1 or LSM8, associates with the precursor of the RNA component of RNase P (pre-P RNA) and may be involved in maturing pre-P RNA; the complex also associates with snoRNA SNR5. This is LSM complex subunit LSM5 (LSM5) from Saccharomyces cerevisiae (strain ATCC 204508 / S288c) (Baker's yeast).